The following is a 419-amino-acid chain: Serine hydroxymethyltransferase (419 aa).

Residues leucine 121 and 125 to 127 each bind (6S)-5,6,7,8-tetrahydrofolate; that span reads GHL. Lysine 230 is subject to N6-(pyridoxal phosphate)lysine. 355–357 contributes to the (6S)-5,6,7,8-tetrahydrofolate binding site; it reads SPF.

It belongs to the SHMT family. Homodimer. It depends on pyridoxal 5'-phosphate as a cofactor.

The protein localises to the cytoplasm. It carries out the reaction (6R)-5,10-methylene-5,6,7,8-tetrahydrofolate + glycine + H2O = (6S)-5,6,7,8-tetrahydrofolate + L-serine. It functions in the pathway one-carbon metabolism; tetrahydrofolate interconversion. It participates in amino-acid biosynthesis; glycine biosynthesis; glycine from L-serine: step 1/1. Catalyzes the reversible interconversion of serine and glycine with tetrahydrofolate (THF) serving as the one-carbon carrier. This reaction serves as the major source of one-carbon groups required for the biosynthesis of purines, thymidylate, methionine, and other important biomolecules. Also exhibits THF-independent aldolase activity toward beta-hydroxyamino acids, producing glycine and aldehydes, via a retro-aldol mechanism. The sequence is that of Serine hydroxymethyltransferase from Alkalilimnicola ehrlichii (strain ATCC BAA-1101 / DSM 17681 / MLHE-1).